Here is a 66-residue protein sequence, read N- to C-terminus: ATP synthase F(0) complex subunit 8 (66 aa).

The chain crosses the membrane as a helical span at residues 8–24; it reads IWLLAVVIVLTTLMIFL. An N6-acetyllysine; alternate modification is found at K54. K54 carries the post-translational modification N6-succinyllysine; alternate. K57 carries the post-translational modification N6-acetyllysine.

The protein belongs to the ATPase protein 8 family. Component of the ATP synthase complex composed at least of ATP5F1A/subunit alpha, ATP5F1B/subunit beta, ATP5MC1/subunit c (homooctomer), MT-ATP6/subunit a, MT-ATP8/subunit 8, ATP5ME/subunit e, ATP5MF/subunit f, ATP5MG/subunit g, ATP5MK/subunit k, ATP5MJ/subunit j, ATP5F1C/subunit gamma, ATP5F1D/subunit delta, ATP5F1E/subunit epsilon, ATP5PF/subunit F6, ATP5PB/subunit b, ATP5PD/subunit d, ATP5PO/subunit OSCP. ATP synthase complex consists of a soluble F(1) head domain (subunits alpha(3) and beta(3)) - the catalytic core - and a membrane F(0) domain - the membrane proton channel (subunits c, a, 8, e, f, g, k and j). These two domains are linked by a central stalk (subunits gamma, delta, and epsilon) rotating inside the F1 region and a stationary peripheral stalk (subunits F6, b, d, and OSCP). Interacts with PRICKLE3.

The protein localises to the mitochondrion membrane. In terms of biological role, subunit 8, of the mitochondrial membrane ATP synthase complex (F(1)F(0) ATP synthase or Complex V) that produces ATP from ADP in the presence of a proton gradient across the membrane which is generated by electron transport complexes of the respiratory chain. ATP synthase complex consist of a soluble F(1) head domain - the catalytic core - and a membrane F(1) domain - the membrane proton channel. These two domains are linked by a central stalk rotating inside the F(1) region and a stationary peripheral stalk. During catalysis, ATP synthesis in the catalytic domain of F(1) is coupled via a rotary mechanism of the central stalk subunits to proton translocation. In vivo, can only synthesize ATP although its ATP hydrolase activity can be activated artificially in vitro. Part of the complex F(0) domain. This is ATP synthase F(0) complex subunit 8 from Mammuthus primigenius (Siberian woolly mammoth).